Reading from the N-terminus, the 123-residue chain is Small ribosomal subunit protein uS12c (123 aa).

This sequence belongs to the universal ribosomal protein uS12 family. Part of the 30S ribosomal subunit.

It is found in the plastid. It localises to the chloroplast. Functionally, with S4 and S5 plays an important role in translational accuracy. Located at the interface of the 30S and 50S subunits. The protein is Small ribosomal subunit protein uS12c (rps12) of Oenothera elata subsp. hookeri (Hooker's evening primrose).